The primary structure comprises 680 residues: Lipase 1 (680 aa).

The N-terminal stretch at 1–34 is a signal peptide; that stretch reads MKSQNKYSIRKFSVGASSILIATLLFLSGGQAQA. The propeptide occupies 35–290; the sequence is AEKQVNMGNS…AKAKDDQTNK (256 aa). The interval 82–259 is disordered; that stretch reads KNLHNDKTIS…PTKDNDKKNG (178 aa). The segment covering 84 to 112 has biased composition (basic and acidic residues); sequence LHNDKTISEENHRKTDDLNKDQLKDDKKS. Residues 125-138 show a composition bias toward polar residues; sequence KNNNANPSDVNQGL. Residues 148–170 are compositionally biased toward low complexity; sequence SKVASQQQSKEADNSQDSNANNN. A compositionally biased stretch (polar residues) spans 204–223; it reads QPQQNNQANDKITNYNFNNE. Residues 224–234 are compositionally biased toward basic and acidic residues; that stretch reads QEVKPQKDEKT. The segment covering 235–246 has biased composition (polar residues); the sequence is LSVSDLKNNQKS. The Nucleophile role is filled by S408. D600 acts as the Charge relay system in catalysis. D638 lines the Ca(2+) pocket. The active-site Charge relay system is the H639. Positions 641, 646, and 649 each coordinate Ca(2+).

This sequence belongs to the AB hydrolase superfamily. Lipase family.

It localises to the secreted. It carries out the reaction a triacylglycerol + H2O = a diacylglycerol + a fatty acid + H(+). The sequence is that of Lipase 1 (lip1) from Staphylococcus aureus (strain MSSA476).